The chain runs to 275 residues: Bifunctional protein FolD (275 aa).

NADP(+)-binding positions include 161-163 (GRS), Ser-186, and Thr-227.

The protein belongs to the tetrahydrofolate dehydrogenase/cyclohydrolase family. In terms of assembly, homodimer.

The catalysed reaction is (6R)-5,10-methylene-5,6,7,8-tetrahydrofolate + NADP(+) = (6R)-5,10-methenyltetrahydrofolate + NADPH. The enzyme catalyses (6R)-5,10-methenyltetrahydrofolate + H2O = (6R)-10-formyltetrahydrofolate + H(+). It participates in one-carbon metabolism; tetrahydrofolate interconversion. Functionally, catalyzes the oxidation of 5,10-methylenetetrahydrofolate to 5,10-methenyltetrahydrofolate and then the hydrolysis of 5,10-methenyltetrahydrofolate to 10-formyltetrahydrofolate. The sequence is that of Bifunctional protein FolD from Parafrankia sp. (strain EAN1pec).